The following is a 306-amino-acid chain: Ribosomal protein L11 methyltransferase (306 aa).

Residues threonine 154, glycine 179, aspartate 201, and asparagine 242 each coordinate S-adenosyl-L-methionine.

It belongs to the methyltransferase superfamily. PrmA family.

The protein resides in the cytoplasm. The catalysed reaction is L-lysyl-[protein] + 3 S-adenosyl-L-methionine = N(6),N(6),N(6)-trimethyl-L-lysyl-[protein] + 3 S-adenosyl-L-homocysteine + 3 H(+). In terms of biological role, methylates ribosomal protein L11. The protein is Ribosomal protein L11 methyltransferase of Xylella fastidiosa (strain 9a5c).